We begin with the raw amino-acid sequence, 176 residues long: Large ribosomal subunit protein uL6 (176 aa).

Residues 153-170 show a composition bias toward basic and acidic residues; sequence PEPYKGKGIRYGDEEVRR. Positions 153–176 are disordered; the sequence is PEPYKGKGIRYGDEEVRRKEAKKK.

Belongs to the universal ribosomal protein uL6 family. Part of the 50S ribosomal subunit.

In terms of biological role, this protein binds to the 23S rRNA, and is important in its secondary structure. It is located near the subunit interface in the base of the L7/L12 stalk, and near the tRNA binding site of the peptidyltransferase center. The polypeptide is Large ribosomal subunit protein uL6 (Chromohalobacter salexigens (strain ATCC BAA-138 / DSM 3043 / CIP 106854 / NCIMB 13768 / 1H11)).